A 337-amino-acid chain; its full sequence is Tryptophan--tRNA ligase (337 aa).

Residues 11–13 (QPT) and 19–20 (GN) contribute to the ATP site. The 'HIGH' region signature appears at 12 to 20 (PTGNLHLGN). Asp-135 is a binding site for L-tryptophan. Residues 147 to 149 (GED), Val-190, and 199 to 203 (KMSKS) contribute to the ATP site. A 'KMSKS' region motif is present at residues 199-203 (KMSKS).

This sequence belongs to the class-I aminoacyl-tRNA synthetase family. As to quaternary structure, homodimer.

It is found in the cytoplasm. The enzyme catalyses tRNA(Trp) + L-tryptophan + ATP = L-tryptophyl-tRNA(Trp) + AMP + diphosphate + H(+). Functionally, catalyzes the attachment of tryptophan to tRNA(Trp). The protein is Tryptophan--tRNA ligase of Synechocystis sp. (strain ATCC 27184 / PCC 6803 / Kazusa).